Reading from the N-terminus, the 130-residue chain is Con-Ins G2 (130 aa).

The N-terminal stretch at 1 to 24 is a signal peptide; the sequence is MTTSSYFLLVALGLLLYVRQSFST. Cystine bridges form between cysteine 29–cysteine 100, cysteine 41–cysteine 103, cysteine 53–cysteine 116, and cysteine 102–cysteine 107. Proline 34 is subject to 4-hydroxyproline; partial. The interval 54 to 74 is disordered; that stretch reads EEEEARRGGTNDGGKKRRRAS. The propeptide at 59–92 is c peptide; sequence RRGGTNDGGKKRRRASPLWKRRRFLSMLKARAKR. Glutamate 111 bears the 4-carboxyglutamate; partial mark.

Belongs to the insulin family. In terms of assembly, heterodimer of A and B chains; disulfide-linked. As to expression, expressed by the venom gland.

The protein resides in the secreted. Its function is as follows. This venom insulin, from a fish-hunting cone snail, facilitates prey capture by rapidly inducing hypoglycemic shock. Intraperitoneal injection of this peptide into zebrafish lowers blood glucose with the same potency than human insulin. In vivo, when applied to water, this peptide reduces overall locomotor activity of zebrafish larvae, observed as a significant decrease in the percentage of time spent swimming and movement frequency. The polypeptide is Con-Ins G2 (Conus geographus (Geography cone)).